A 207-amino-acid polypeptide reads, in one-letter code: Small ribosomal subunit protein uS4 (207 aa).

A disordered region spans residues 31 to 55 (KCKLDSKPGQHGRTSGARTSDYGTQ). Residues 42–53 (GRTSGARTSDYG) are compositionally biased toward polar residues. In terms of domain architecture, S4 RNA-binding spans 97–160 (SRLDNVVYRM…KKQARIVEAL (64 aa)).

It belongs to the universal ribosomal protein uS4 family. In terms of assembly, part of the 30S ribosomal subunit. Contacts protein S5. The interaction surface between S4 and S5 is involved in control of translational fidelity.

One of the primary rRNA binding proteins, it binds directly to 16S rRNA where it nucleates assembly of the body of the 30S subunit. In terms of biological role, with S5 and S12 plays an important role in translational accuracy. This is Small ribosomal subunit protein uS4 from Burkholderia ambifaria (strain ATCC BAA-244 / DSM 16087 / CCUG 44356 / LMG 19182 / AMMD) (Burkholderia cepacia (strain AMMD)).